Reading from the N-terminus, the 101-residue chain is uncharacterized protein (101 aa).

The next 2 helical transmembrane spans lie at 35–55 and 66–86; these read LWTM…LIII and FLFF…TLLF.

It is found in the membrane. This is an uncharacterized protein from Saccharomyces cerevisiae (strain ATCC 204508 / S288c) (Baker's yeast).